Reading from the N-terminus, the 2313-residue chain is Cell surface glycoprotein 1 (2313 aa).

The first 28 residues, 1–28 (MKRKNKVLSILLTLLLIISTTSVNMSFA), serve as a signal peptide directing secretion. Cohesin domains follow at residues 34–197 (IEMV…VVEA) and 205–367 (VALE…EIVV). Residues 369 to 378 (GEEPGEEPTE) show a composition bias toward acidic residues. Residues 369–400 (GEEPGEEPTEEPVPTETSVDPTPTVTEEPVPS) are disordered. A compositionally biased stretch (low complexity) spans 380–400 (PVPTETSVDPTPTVTEEPVPS). One can recognise a Cohesin 3 domain in the interval 407–569 (VIMELDKTKV…SVVQPGEIVV (163 aa)). Over residues 571-580 (GEEPGEEPTE) the composition is skewed to acidic residues. A disordered region spans residues 571–602 (GEEPGEEPTEEPVPTETSVDPTPTVTEEPVPS). Residues 582–602 (PVPTETSVDPTPTVTEEPVPS) are compositionally biased toward low complexity. Residues 609–771 (VIMELDKTKV…SVVQPGEIVA (163 aa)) enclose the Cohesin 4 domain. Positions 772 to 782 (EGEEPGEEPTE) are enriched in acidic residues. Positions 772–805 (EGEEPGEEPTEEPVPTETSADPTPTVTEEPVPSE) are disordered. The segment covering 784 to 803 (PVPTETSADPTPTVTEEPVP) has biased composition (low complexity). The Cohesin 5 domain maps to 811–973 (VIMELDKTKV…SVVQPGEIVA (163 aa)). The span at 974–984 (EGEEPGEEPTE) shows a compositional bias: acidic residues. A disordered region spans residues 974–1007 (EGEEPGEEPTEEPVPTETPVDPTPTVTEEPVPSE). The span at 986-1007 (PVPTETPVDPTPTVTEEPVPSE) shows a compositional bias: low complexity. Residues 1013 to 1175 (VIMELDKTKV…SVVQPGEIVA (163 aa)) enclose the Cohesin 6 domain. Disordered stretches follow at residues 1177-1203 (GEEP…EPVP) and 1374-2111 (ASDE…PDGS). Residues 1184–1203 (PVPTETPVDPTPTVTEEPVP) are compositionally biased toward low complexity. The 165-residue stretch at 1211–1375 (VIMELDKTKV…IQPAPIKAAS (165 aa)) folds into the Cohesin 7 domain. A compositionally biased stretch (low complexity) spans 1376-1390 (DEPIPTDTPSDEPTP). The tract at residues 1383-2025 (TPSDEPTPSD…SDEPTPSETP (643 aa)) is approximate tandem repeats of T-P-S-D-E-P. Positions 1391-1411 (SDEPTPSDEPTPSDEPTPSDE) are enriched in pro residues. Low complexity predominate over residues 1423–1433 (PTDTPSDEPTP). Over residues 1434 to 1454 (SDEPTPSDEPTPSDEPTPSDE) the composition is skewed to pro residues. Over residues 1466 to 1476 (PTDTPSDEPTP) the composition is skewed to low complexity. Over residues 1477–1497 (SDEPTPSDEPTPSDEPTPSDE) the composition is skewed to pro residues. Over residues 1509 to 1519 (PTDTPSDEPTP) the composition is skewed to low complexity. Pro residues predominate over residues 1520–1540 (SDEPTPSDEPTPSDEPTPSDE). The segment covering 1552-1562 (PTDTPSDEPTP) has biased composition (low complexity). The span at 1563 to 1595 (SDEPTPSDEPTPSDEPTPSDEPTPSDEPTPSDE) shows a compositional bias: pro residues. The segment covering 1607-1617 (PTDTPSDEPTP) has biased composition (low complexity). The span at 1618–1650 (SDEPTPSDEPTPSDEPTPSDEPTPSDEPTPSDE) shows a compositional bias: pro residues. The segment covering 1662 to 1672 (PTDTPSDEPTP) has biased composition (low complexity). A compositionally biased stretch (pro residues) spans 1673–1693 (SDEPTPSDEPTPSDEPTPSDE). Low complexity predominate over residues 1705–1715 (PTDTPSDEPTP). The segment covering 1716–1736 (SDEPTPSDEPTPSDEPTPSDE) has biased composition (pro residues). Over residues 1748 to 1758 (PTDTPSDEPTP) the composition is skewed to low complexity. Over residues 1759 to 1779 (SDEPTPSDEPTPSDEPTPSDE) the composition is skewed to pro residues. The span at 1791–1801 (PTDTPSDEPTP) shows a compositional bias: low complexity. Pro residues predominate over residues 1802-1822 (SDEPTPSDEPTPSDEPTPSDE). Residues 1834-1844 (PTDTPSDEPTP) show a composition bias toward low complexity. The span at 1845 to 1865 (SDEPTPSDEPTPSDEPTPSDE) shows a compositional bias: pro residues. A compositionally biased stretch (low complexity) spans 1877–1887 (PTDTPSDEPTP). Over residues 1888 to 1908 (SDEPTPSDEPTPSDEPTPSDE) the composition is skewed to pro residues. Positions 1920–1930 (PTDTPSDEPTP) are enriched in low complexity. Residues 1931 to 1963 (SDEPTPSDEPTPSDEPTPSDEPTPSDEPTPSDE) show a composition bias toward pro residues. Low complexity predominate over residues 1975-1985 (PTDTPSDEPTP). Composition is skewed to pro residues over residues 1986 to 2018 (SDEP…PSDE) and 2027 to 2039 (EPTP…PTPS). Residues 2045–2062 (GSGGSGGSGGGGGGGGGT) are compositionally biased toward gly residues. SLH domains follow at residues 2067–2140 (PTPT…YGAQ), 2141–2204 (SASP…EIMS), and 2211–2274 (ISNP…GAPK). A compositionally biased stretch (low complexity) spans 2073 to 2082 (SKPTSTPAPT).

As to quaternary structure, assembled into mono-layered crystalline arrays.

It is found in the secreted. It localises to the cell wall. The protein localises to the S-layer. The protein is Cell surface glycoprotein 1 (olpB) of Acetivibrio thermocellus (strain ATCC 27405 / DSM 1237 / JCM 9322 / NBRC 103400 / NCIMB 10682 / NRRL B-4536 / VPI 7372) (Clostridium thermocellum).